The primary structure comprises 373 residues: MKPHFRNTVERMYRDTFSYNFYNRPILSRRNTVWLCYEVKTKGPSRPRLDAKIFRGQVYSQPEHHAEMCFLSWFCGNQLPAYKCFQITWFVSWTPCPDCVAKLAEFLAEHPNVTLTISAARLYYYWERDYRRALCRLSQAGARVKIMDDEEFAYCWENFVYSEGQPFMPWYKFDDNYAFLHRTLKEILRNPMEAMYPHIFYFHFKNLRKAYGRNESWLCFTMEVVKHHSPVSWKRGVFRNQVDPETHCHAERCFLSWFCDDILSPNTNYEVTWYTSWSPCPECAGEVAEFLARHSNVNLTIFTARLYYFWDTDYQEGLRSLSQEGASVEIMGYKDFKYCWENFVYNDDEPFKPWKGLKYNFLFLDSKLQEILE.

CMP/dCMP-type deaminase domains lie at 29-137 (RRNT…LCRL) and 174-321 (DDNY…LRSL). Lys-52 is covalently cross-linked ((Microbial infection) Glycyl lysine isopeptide (Lys-Gly) (interchain with G-Cter in ubiquitin)). Zn(2+) is bound by residues His-65, Cys-96, and Cys-99. A (Microbial infection) Glycyl lysine isopeptide (Lys-Gly) (interchain with G-Cter in ubiquitin) cross-link involves residue Lys-234. Residue His-249 coordinates Zn(2+). Glu-251 (proton donor) is an active-site residue. Residues Cys-280 and Cys-283 each coordinate Zn(2+). Cys-280 and Cys-283 are disulfide-bonded. Residues Lys-334, Lys-352, Lys-355, and Lys-358 each participate in a (Microbial infection) Glycyl lysine isopeptide (Lys-Gly) (interchain with G-Cter in ubiquitin) cross-link.

The protein belongs to the cytidine and deoxycytidylate deaminase family. In terms of assembly, homodimer. Interacts with APOBEC3G in an RNA-dependent manner. Interacts with AGO1, AGO2 and AGO3. (Microbial infection) Interacts with HIV-1 Vif, leading to its ubiquitination and degradation by the proteasome. In the absence of Vif protein, specifically packaged into HIV-1 virions. It depends on Zn(2+) as a cofactor. Post-translationally, (Microbial infection) Following infection by HIV-1, ubiquitinated by a cullin-5-RING E3 ubiquitin-protein ligase complex (ECS complex) hijacked by the HIV-1 Vif protein, leading to its degradation. As to expression, widely expressed. Highly expressed in ovary.

It localises to the cytoplasm. The protein localises to the P-body. It carries out the reaction a 2'-deoxycytidine in single-stranded DNA + H2O + H(+) = a 2'-deoxyuridine in single-stranded DNA + NH4(+). With respect to regulation, (Microbial infection) Antiviral activity is neutralized by the HIV-1 virion infectivity factor (Vif), that prevents its incorporation into progeny virions by both inhibiting its translation and/or by inducing its ubiquitination and subsequent degradation by the 26S proteasome. In terms of biological role, DNA deaminase (cytidine deaminase) which acts as an inhibitor of retrovirus replication and retrotransposon mobility via deaminase-dependent and -independent mechanisms. Exhibits antiviral activity against viruse such as HIV-1 or HIV-2. After the penetration of retroviral nucleocapsids into target cells of infection and the initiation of reverse transcription, it can induce the conversion of cytosine to uracil in the minus-sense single-strand viral DNA, leading to G-to-A hypermutations in the subsequent plus-strand viral DNA. The resultant detrimental levels of mutations in the proviral genome, along with a deamination-independent mechanism that works prior to the proviral integration, together exert efficient antiretroviral effects in infected target cells. Selectively targets single-stranded DNA and does not deaminate double-stranded DNA or single- or double-stranded RNA. Exhibits antiviral activity also against hepatitis B virus (HBV), equine infectious anemia virus (EIAV), xenotropic MuLV-related virus (XMRV) and simian foamy virus (SFV) and may inhibit the mobility of LTR and non-LTR retrotransposons. May also play a role in the epigenetic regulation of gene expression through the process of active DNA demethylation. This Homo sapiens (Human) protein is DNA dC-&gt;dU-editing enzyme APOBEC-3F.